We begin with the raw amino-acid sequence, 359 residues long: MKENRKIIHIDMDAFYASIEQRDNPKYKGKPLIVGGDPNRRGVVATCSYEARKYGIHSAMPSLTAYKLCPKAIFIRPRMEVYKKVSRQVMNILNEYSNIVEPLSLDEAFVDVSKSKRCKGSATLIALEIKERIFKEVGLTASAGVSFNKFLAKMASDFRKPDGITVITEENSKDFIRKLPIGKFFGVGRVTKNKLNNIGVFKGEDLLGFSEKELIGILGDRGKILYEFARGIDNRQVNPYRIRKSIGKEITLREDIEDIEEMIEILEKISERVSESLCLLNKKGKTVTLKVKFNDFKHITRSITLEHFLKEQKEIMECVKDLISIVDFKNKKVRLLGITISSLEENIITEEREQLSFDV.

In terms of domain architecture, UmuC spans 7–188; it reads IIHIDMDAFY…LPIGKFFGVG (182 aa). The Mg(2+) site is built by Asp11 and Asp106. Residue Glu107 is part of the active site.

Belongs to the DNA polymerase type-Y family. In terms of assembly, monomer. Mg(2+) serves as cofactor.

The protein resides in the cytoplasm. It carries out the reaction DNA(n) + a 2'-deoxyribonucleoside 5'-triphosphate = DNA(n+1) + diphosphate. Its function is as follows. Poorly processive, error-prone DNA polymerase involved in untargeted mutagenesis. Copies undamaged DNA at stalled replication forks, which arise in vivo from mismatched or misaligned primer ends. These misaligned primers can be extended by PolIV. Exhibits no 3'-5' exonuclease (proofreading) activity. May be involved in translesional synthesis, in conjunction with the beta clamp from PolIII. The sequence is that of DNA polymerase IV from Clostridium perfringens (strain 13 / Type A).